Reading from the N-terminus, the 373-residue chain is tRNA-specific 2-thiouridylase MnmA (373 aa).

Residues 12–19 (GMSGGVDS) and Met38 contribute to the ATP site. An interaction with target base in tRNA region spans residues 98-100 (NPD). Catalysis depends on Cys103, which acts as the Nucleophile. Cys103 and Cys200 are joined by a disulfide. Gly127 serves as a coordination point for ATP. Residues 150-152 (KDQ) are interaction with tRNA. The active-site Cysteine persulfide intermediate is the Cys200. The interaction with tRNA stretch occupies residues 312-313 (RY).

It belongs to the MnmA/TRMU family.

It localises to the cytoplasm. It catalyses the reaction S-sulfanyl-L-cysteinyl-[protein] + uridine(34) in tRNA + AH2 + ATP = 2-thiouridine(34) in tRNA + L-cysteinyl-[protein] + A + AMP + diphosphate + H(+). In terms of biological role, catalyzes the 2-thiolation of uridine at the wobble position (U34) of tRNA, leading to the formation of s(2)U34. The sequence is that of tRNA-specific 2-thiouridylase MnmA from Streptococcus pneumoniae (strain ATCC 700669 / Spain 23F-1).